The following is a 292-amino-acid chain: Tubulin beta chain (292 aa).

2 residues coordinate GTP: Asn49 and Asn71. Residues 265-292 are disordered; the sequence is SEYQQYQDATAEEEGEFDEEEEGDEEAA. Acidic residues predominate over residues 274–292; sequence TAEEEGEFDEEEEGDEEAA.

This sequence belongs to the tubulin family. Dimer of alpha and beta chains. A typical microtubule is a hollow water-filled tube with an outer diameter of 25 nm and an inner diameter of 15 nM. Alpha-beta heterodimers associate head-to-tail to form protofilaments running lengthwise along the microtubule wall with the beta-tubulin subunit facing the microtubule plus end conferring a structural polarity. Microtubules usually have 13 protofilaments but different protofilament numbers can be found in some organisms and specialized cells. Mg(2+) serves as cofactor.

The protein localises to the cytoplasm. The protein resides in the cytoskeleton. Functionally, tubulin is the major constituent of microtubules, a cylinder consisting of laterally associated linear protofilaments composed of alpha- and beta-tubulin heterodimers. Microtubules grow by the addition of GTP-tubulin dimers to the microtubule end, where a stabilizing cap forms. Below the cap, tubulin dimers are in GDP-bound state, owing to GTPase activity of alpha-tubulin. This Strongylocentrotus purpuratus (Purple sea urchin) protein is Tubulin beta chain.